Here is a 283-residue protein sequence, read N- to C-terminus: NAD(P)H-hydrate epimerase (283 aa).

Residues M1–C28 constitute a mitochondrion transit peptide. Positions A61 to L270 constitute a YjeF N-terminal domain. (6S)-NADPHX is bound at residue N115–D119. K(+) is bound by residues N116 and D180. (6S)-NADPHX contacts are provided by residues G184–A190 and D213. S216 contacts K(+).

This sequence belongs to the NnrE/AIBP family. In terms of assembly, homodimer. Interacts with apoa1a. Binds to high-density lipoprotein. It depends on K(+) as a cofactor.

The protein localises to the mitochondrion. It localises to the secreted. The enzyme catalyses (6R)-NADHX = (6S)-NADHX. It carries out the reaction (6R)-NADPHX = (6S)-NADPHX. Catalyzes the epimerization of the S- and R-forms of NAD(P)HX, a damaged form of NAD(P)H that is a result of enzymatic or heat-dependent hydration. This is a prerequisite for the S-specific NAD(P)H-hydrate dehydratase to allow the repair of both epimers of NAD(P)HX. This chain is NAD(P)H-hydrate epimerase, found in Danio rerio (Zebrafish).